Here is a 2672-residue protein sequence, read N- to C-terminus: eIF-2-alpha kinase activator GCN1 (2672 aa).

11 HEAT repeats span residues 5-42 (LNWEDISPVLEKGTRESHVSKRVPFLQDISQLVRQETL), 79-117 (NLEPCLLENFIRFISDVVISNPATKAVADYLNLLDWINS), 174-211 (CIFQTTVKAFLKCLKDNDDSISFMKISIKTVLESYSKL), 227-267 (QAAL…NPPS), 329-366 (FASSKLINQYFSSFKSSKEVVRSVSLQSMIILLRKISN), 372-410 (EDLTKLIDEIFKNIKSNLNADYKSLISKILIEIPLTHYE), 509-549 (HGHA…NSSI), 611-648 (KYVTSVLLAITSELPDKEASIKVLINALVIAQWNIFNI), 706-745 (IQPNEFTPILCKTIEADLTADDFSRLSEEDFEIFAGEEGV), 902-932 (QDYLQEPLVELLTRVLFRIKFVSNQAAIDSI), and 933-970 (SLTYILPLLINVLEKGKAIALKNADKPVVKAEFVEEDE). The stretch at 975–994 (LLLAMEIISVHAEAFEDPSI) is one HEAT 12; degenerate repeat. An HEAT 13; degenerate repeat occupies 995-1030 (PRISIVEVLLSLLSLPSKAKIAKDCFNALCQSISVA). 32 HEAT repeats span residues 1031 to 1067 (PNQEDLDMILSNLLSPNQFVRSTILETLDNEFELEPF), 1099 to 1138 (VVNDELLKSLFPLFNQDDSGLRLFAANAYAFGAVSLFTSE), 1185 to 1224 (STVAITLKIMAKAFSAEDDTVVNIIKFLVDDGGLVDREPI), 1243 to 1281 (QNSKDLIPIFEEALSSSTDSALKENVIILYGTLARHLQQ), 1284 to 1321 (ARIHTIIERLLSTLDTPSADIQQAVSACIAPLVFQFKQ), 1363 to 1401 (LSEFDIIRNLIEAAEDKKEPKRRESVGFCFQYLSESLGK), 1405 to 1442 (PYVIEILPNILKNLGDAVPEVRDATARATKAIMAHTTG), 1444 to 1480 (GVKKLIPVAVSNLDEIAWRTKRGSVQLLGNMAYLDPT), 1484 to 1521 (ASLSTIVPEIVGVLNDSHKEVRKAADESLKRFGEVIRN), 1523 to 1559 (EIQKLVPVLLQAIGDPTKYTEEALDSLIQTQFVHYID), 1561 to 1598 (PSLALIIHIIHRGMHDRSANIKRKACKIVGNMAILVDT), 1603 to 1640 (PYLQQLIDEVEIAMVDPVPNTRATAARALGALVERLGE), 1641 to 1679 (EQFPDLIPRLLDTLSDESKSGDRLGSAQALAEVISGLGL), 1681 to 1717 (KLDEMLPTILAGVTNFRAYIREGFMPLLLFLPVCFGS), 1721 to 1758 (PYINQIIQPILSGLADNDENIRDTALKAGKLIVKNYAT), 1760 to 1796 (AVDLLLPELERGMFDENDRIRLSSVQLTGELLFQVTG), 1825 to 1862 (DRRDRILAALFVCRNDTSGIVRATTVDIWKALVPNTPR), 1863 to 1903 (AVKE…RVGG), 1905 to 1942 (ALSQLLPSLEESLIETSNSDSRQGVCIALYELIESAST), 1947 to 1984 (QFQSTIVNIIRTALIDESATVREAAALSFDVFQDVVGK), 1985 to 2024 (TAVDEVLPYLLHMLESSDNSDFALLGLQEIMSKKSDVIFP), 2026 to 2055 (LIPTLLAPPIDAFRASALGSLAEVAGSALY), 2057 to 2095 (RLSIIINALVDAIIGTSEDESTKGALELALDRVFLSVND), 2097 to 2134 (EGLHPLLQQIMSLLKSDNIEKRIAVLERLPNFFDKTVL), 2138 to 2175 (VYIPNFVSHAILSLDDEDQRVVNGNFNALSTLLKKVDK), 2206 to 2243 (RGPNCVLPIFLHGLMYGSNDEREESALAIADVVSKTPA), 2250 to 2286 (VSVITGPLIRVVGERFSSDIKAAILFALNVLFIKIPM), 2290 to 2328 (PFIPQLQRTFVKSLSDATNETLRLRAAKALGALIEHQPR), 2347 to 2384 (GVKTAMLKALLEVIMKAGSKLNENSKTNIVNLVEEEML), 2392 to 2429 (VAYAKLIGSLSEILSNDEAHKILQDKVLNADLDGETGK), 2450 to 2487 (GLIDEFVSYILNAIRSPDVYFGENGTIAAGKLLLLEGE), and 2506 to 2546 (ENIN…FKFD). The tract at residues 1330–1641 (LMEKLLNPTV…GALVERLGEE (312 aa)) is EF3-like region. The tract at residues 2207–2356 (GPNCVLPIFL…GVKTAMLKAL (150 aa)) is RWDBD region.

It belongs to the GCN1 family. Interacts (via N- and C-terminus) with GCN2 (via N-terminal RWD domain); this interaction stimulates GCN2 kinase activity in a GCN20-dependent manner in response to amino acid starvation. Interacts (via C-terminus) with GCN20 (via N-terminus); this interaction stimulates GCN2 kinase activity in response to amino acid starvation. The GCN1-GCN20 complex interacts with GCN2 on translating ribosomes in amino acid-starved cells; GCN1 may bind near the ribosomal A-site and promotes the transfer of uncharged tRNAs from the A-site to the tRNA-binding domain in GCN2 for its subsequent kinase activation, and hence allowing GCN4 translational activation and derepression of amino acid biosynthetic genes. Interacts (via C-terminus) with YIH1 (via N-terminus); this interaction reduces the GCN1-GCN20 complex formation and prevents the interaction of GCN1 with GCN2 and GCN2 kinase activation in amino acid-starved cells. Interacts with GIR2; this interaction prevents the interaction of GCN1 with GCN2 and GCN2 kinase activation in amino acid-starved cells. Interacts (via middle region) with RPS10A and RPS10B; these interactions are direct and promote GCN2 kinase activation. Associates (via N-terminus) with ribosomes; this association is stimulated in a ATP- and GCN20-dependent manner and is necessary to activate GCN2 kinase activity.

It is found in the cytoplasm. Ribosome collision sensor that activates a translation quality control pathway when a ribosome has stalled during translation. Directly binds to the ribosome and acts as a sentinel for colliding ribosomes. GCN1 also acts as a positive activator of the integrated stress response (ISR) by mediating activation of GCN2 in response to low amino acid, carbon, or purine availability. Component of the GCN1-GCN20 complex that forms a complex with GCN2 on translating ribosomes: during this process, GCN1 acts as a chaperone to facilitate delivery of uncharged tRNAs that enter the A-site of ribosomes to the tRNA-binding domain of GCN2, and hence stimulating GCN2 kinase activity, leading to phosphorylation of eukaryotic translation initiation factor 2 (eIF-2-alpha/SUI2). eIF-2-alpha/SUI2 phosphorylation converts eIF-2-alpha/SUI2 into a global protein synthesis inhibitor, leading to a global attenuation of cap-dependent translation, and thus to a reduced overall utilization of amino acids, while concomitantly initiating the preferential translation of ISR-specific mRNAs, such as the transcriptional activator GCN4, and hence allowing GCN4-mediated reprogramming of amino acid biosynthetic gene expression to alleviate nutrient depletion. This is eIF-2-alpha kinase activator GCN1 from Saccharomyces cerevisiae (strain ATCC 204508 / S288c) (Baker's yeast).